The sequence spans 227 residues: Isopentenyl-diphosphate delta-isomerase 2 (227 aa).

Lys36 is a substrate binding site. Residues His40 and His51 each coordinate Mg(2+). The Nudix hydrolase domain occupies 49 to 199 (LLHRAFSVVL…EVKVTPWLRT (151 aa)). Arg70 and Lys74 together coordinate substrate. The active site involves Ser86. Residue Ser87 participates in substrate binding. Mg(2+)-binding residues include Glu146 and Glu148. Residue Glu148 is part of the active site. Positions 225–227 (HRV) match the Microbody targeting signal motif.

Belongs to the IPP isomerase type 1 family. Requires Mg(2+) as cofactor. In terms of tissue distribution, muscle-specific expression.

It is found in the peroxisome. It catalyses the reaction isopentenyl diphosphate = dimethylallyl diphosphate. The protein operates within isoprenoid biosynthesis; dimethylallyl diphosphate biosynthesis; dimethylallyl diphosphate from isopentenyl diphosphate: step 1/1. Catalyzes the 1,3-allylic rearrangement of the homoallylic substrate isopentenyl (IPP) to its highly electrophilic allylic isomer, dimethylallyl diphosphate (DMAPP). The protein is Isopentenyl-diphosphate delta-isomerase 2 (IDI2) of Homo sapiens (Human).